Here is a 214-residue protein sequence, read N- to C-terminus: Large ribosomal subunit protein uL3 (214 aa).

Belongs to the universal ribosomal protein uL3 family. Part of the 50S ribosomal subunit. Forms a cluster with proteins L14 and L19.

In terms of biological role, one of the primary rRNA binding proteins, it binds directly near the 3'-end of the 23S rRNA, where it nucleates assembly of the 50S subunit. This is Large ribosomal subunit protein uL3 from Streptomyces coelicolor (strain ATCC BAA-471 / A3(2) / M145).